Reading from the N-terminus, the 505-residue chain is ATP synthase subunit alpha, chloroplastic (505 aa).

170 to 177 contributes to the ATP binding site; the sequence is GDRQTGKT.

It belongs to the ATPase alpha/beta chains family. As to quaternary structure, F-type ATPases have 2 components, CF(1) - the catalytic core - and CF(0) - the membrane proton channel. CF(1) has five subunits: alpha(3), beta(3), gamma(1), delta(1), epsilon(1). CF(0) has four main subunits: a, b, b' and c.

Its subcellular location is the plastid. The protein resides in the chloroplast thylakoid membrane. It carries out the reaction ATP + H2O + 4 H(+)(in) = ADP + phosphate + 5 H(+)(out). In terms of biological role, produces ATP from ADP in the presence of a proton gradient across the membrane. The alpha chain is a regulatory subunit. In Carica papaya (Papaya), this protein is ATP synthase subunit alpha, chloroplastic.